A 433-amino-acid polypeptide reads, in one-letter code: Chaperone SurA (433 aa).

The N-terminal stretch at 1–24 (MDGIKLLLSIIILYFYTYINCAIA) is a signal peptide. PpiC domains follow at residues 173-274 (NTTF…KVHD) and 285-385 (ITEV…QLQN).

The protein localises to the periplasm. It catalyses the reaction [protein]-peptidylproline (omega=180) = [protein]-peptidylproline (omega=0). Chaperone involved in the correct folding and assembly of outer membrane proteins. Recognizes specific patterns of aromatic residues and the orientation of their side chains, which are found more frequently in integral outer membrane proteins. May act in both early periplasmic and late outer membrane-associated steps of protein maturation. The sequence is that of Chaperone SurA from Baumannia cicadellinicola subsp. Homalodisca coagulata.